Consider the following 356-residue polypeptide: Protein RecA (356 aa).

ATP is bound at residue 77–84 (GPESSGKT).

This sequence belongs to the RecA family.

The protein resides in the cytoplasm. In terms of biological role, can catalyze the hydrolysis of ATP in the presence of single-stranded DNA, the ATP-dependent uptake of single-stranded DNA by duplex DNA, and the ATP-dependent hybridization of homologous single-stranded DNAs. It interacts with LexA causing its activation and leading to its autocatalytic cleavage. The polypeptide is Protein RecA (Caulobacter sp. (strain K31)).